The chain runs to 436 residues: ATP-dependent 6-phosphofructokinase (436 aa).

Residues Gly-90, 155 to 156 (RG), and 180 to 183 (GDGT) contribute to the ATP site. Asp-181 is a Mg(2+) binding site. Substrate is bound by residues 209 to 211 (TID), 254 to 256 (MGR), Glu-307, and 362 to 365 (YMIR). The Proton acceptor role is filled by Asp-211.

This sequence belongs to the phosphofructokinase type A (PFKA) family. PPi-dependent PFK group II subfamily. Atypical ATP-dependent clade 'X' sub-subfamily. As to quaternary structure, homodimer. Aggregates to a homotetramer after activation by ATP. Mg(2+) is required as a cofactor.

Its subcellular location is the cytoplasm. It carries out the reaction beta-D-fructose 6-phosphate + ATP = beta-D-fructose 1,6-bisphosphate + ADP + H(+). Its pathway is carbohydrate degradation; glycolysis; D-glyceraldehyde 3-phosphate and glycerone phosphate from D-glucose: step 3/4. Its activity is regulated as follows. Activated by nucleoside triphosphates. Inhibited by phosphoenolpyruvate. EDTA and biphosphonates play the role of inhibitors of kinase activity. Functionally, catalyzes the phosphorylation of D-fructose 6-phosphate to fructose 1,6-bisphosphate by ATP, the first committing step of glycolysis. The polypeptide is ATP-dependent 6-phosphofructokinase (PPi-PFK) (Entamoeba histolytica (strain ATCC 30459 / HM-1:IMSS / ABRM)).